Reading from the N-terminus, the 863-residue chain is DNA gyrase subunit A (863 aa).

Residues 37–500 (LPDARDGLKP…DYDDIDIEDL (464 aa)) form the Topo IIA-type catalytic domain. Tyr-125 serves as the catalytic O-(5'-phospho-DNA)-tyrosine intermediate. The GyrA-box motif lies at 527-533 (QKRGGKG).

Belongs to the type II topoisomerase GyrA/ParC subunit family. As to quaternary structure, heterotetramer, composed of two GyrA and two GyrB chains. In the heterotetramer, GyrA contains the active site tyrosine that forms a transient covalent intermediate with DNA, while GyrB binds cofactors and catalyzes ATP hydrolysis.

It is found in the cytoplasm. It catalyses the reaction ATP-dependent breakage, passage and rejoining of double-stranded DNA.. Functionally, a type II topoisomerase that negatively supercoils closed circular double-stranded (ds) DNA in an ATP-dependent manner to modulate DNA topology and maintain chromosomes in an underwound state. Negative supercoiling favors strand separation, and DNA replication, transcription, recombination and repair, all of which involve strand separation. Also able to catalyze the interconversion of other topological isomers of dsDNA rings, including catenanes and knotted rings. Type II topoisomerases break and join 2 DNA strands simultaneously in an ATP-dependent manner. The chain is DNA gyrase subunit A from Campylobacter jejuni subsp. jejuni serotype O:2 (strain ATCC 700819 / NCTC 11168).